The sequence spans 262 residues: Putative hydro-lyase Sca_2211 (262 aa).

This sequence belongs to the D-glutamate cyclase family.

The protein is Putative hydro-lyase Sca_2211 of Staphylococcus carnosus (strain TM300).